We begin with the raw amino-acid sequence, 169 residues long: MAGDMRKITLEKVVLNMGVGQSGNAVEVAKRALGEISGKKPCGRDAHETQRDFGVRKGEPIGAAVTIRGEDAGALARRLFEAKGGQVKGRSFDDFGNFSFGIGEHIDIPGIKYDPGIGILGLDVCMTLSRPGYGIRKRSKHKARVGRSHRITATEAKDFVVREFGVEIV.

Belongs to the universal ribosomal protein uL5 family. In terms of assembly, part of the 50S ribosomal subunit; contacts the 5S rRNA and probably tRNA. Forms a bridge to the 30S subunit in the 70S ribosome.

Its function is as follows. This is one of the proteins that bind and probably mediate the attachment of the 5S RNA into the large ribosomal subunit, where it forms part of the central protuberance. In the 70S ribosome it contacts protein S13 of the 30S subunit (bridge B1b), connecting the 2 subunits; this bridge is implicated in subunit movement. May contact the P site tRNA; the 5S rRNA and some of its associated proteins might help stabilize positioning of ribosome-bound tRNAs. The polypeptide is Large ribosomal subunit protein uL5 (Cenarchaeum symbiosum (strain A)).